A 274-amino-acid polypeptide reads, in one-letter code: Cytochrome b-c1 complex subunit Rieske, mitochondrial (274 aa).

Over 79–110 the chain is Mitochondrial matrix; sequence SHTDVKVPDFSDYRRAEVLDSTKSSKESSEAR. The chain crosses the membrane as a helical span at residues 111–137; it reads KGFSYLVTATTTVGVAYAAKNVVSQFV. The Mitochondrial intermembrane portion of the chain corresponds to 138-274; that stretch reads SSMSASADVL…FTSDDVVVVG (137 aa). Positions 187–272 constitute a Rieske domain; sequence EAAVEVSQLR…YEFTSDDVVV (86 aa). Cys-217, His-219, Cys-236, His-239, and Ser-241 together coordinate [2Fe-2S] cluster. A disulfide bond links Cys-222 and Cys-238.

This sequence belongs to the Rieske iron-sulfur protein family. As to quaternary structure, component of the ubiquinol-cytochrome c oxidoreductase (cytochrome b-c1 complex, complex III, CIII), a multisubunit enzyme composed of 11 subunits. The complex is composed of 3 respiratory subunits cytochrome b, cytochrome c1 and Rieske protein UQCRFS1, 2 core protein subunits UQCRC1/QCR1 and UQCRC2/QCR2, and 6 low-molecular weight protein subunits UQCRH/QCR6, UQCRB/QCR7, UQCRQ/QCR8, UQCR10/QCR9, UQCR11/QCR10 and subunit 9, the cleavage product of Rieske protein UQCRFS1. The complex exists as an obligatory dimer and forms supercomplexes (SCs) in the inner mitochondrial membrane with NADH-ubiquinone oxidoreductase (complex I, CI) and cytochrome c oxidase (complex IV, CIV), resulting in different assemblies (supercomplex SCI(1)III(2)IV(1) and megacomplex MCI(2)III(2)IV(2)). Incorporation of the Rieske protein UQCRFS1 is the penultimate step in complex III assembly. Interacts with TTC19, which is involved in the clearance of UQCRFS1 fragments. Component of the ubiquinol-cytochrome c oxidoreductase (cytochrome b-c1 complex, complex III, CIII). Subunit 9 corresponds to the mitochondrial targeting sequence (MTS) of Rieske protein UQCRFS1. It is retained after processing and incorporated inside complex III, where it remains bound to the complex and localizes between the 2 core subunits UQCRC1/QCR1 and UQCRC2/QCR2. Requires [2Fe-2S] cluster as cofactor. In terms of processing, proteolytic processing is necessary for the correct insertion of UQCRFS1 in the complex III dimer. Several fragments are generated during UQCRFS1 insertion, most probably due to the endogenous matrix-processing peptidase (MPP) activity of the 2 core protein subunits UQCRC1/QCR1 and UQCRC2/QCR2, which are homologous to the 2 mitochondrial-processing peptidase (MPP) subunits beta-MPP and alpha-MPP respectively. The action of the protease is also necessary for the clearance of the UQCRFS1 fragments.

The protein localises to the mitochondrion inner membrane. It catalyses the reaction a quinol + 2 Fe(III)-[cytochrome c](out) = a quinone + 2 Fe(II)-[cytochrome c](out) + 2 H(+)(out). Component of the ubiquinol-cytochrome c oxidoreductase, a multisubunit transmembrane complex that is part of the mitochondrial electron transport chain which drives oxidative phosphorylation. The respiratory chain contains 3 multisubunit complexes succinate dehydrogenase (complex II, CII), ubiquinol-cytochrome c oxidoreductase (cytochrome b-c1 complex, complex III, CIII) and cytochrome c oxidase (complex IV, CIV), that cooperate to transfer electrons derived from NADH and succinate to molecular oxygen, creating an electrochemical gradient over the inner membrane that drives transmembrane transport and the ATP synthase. The cytochrome b-c1 complex catalyzes electron transfer from ubiquinol to cytochrome c, linking this redox reaction to translocation of protons across the mitochondrial inner membrane, with protons being carried across the membrane as hydrogens on the quinol. In the process called Q cycle, 2 protons are consumed from the matrix, 4 protons are released into the intermembrane space and 2 electrons are passed to cytochrome c. The Rieske protein is a catalytic core subunit containing a [2Fe-2S] iron-sulfur cluster. It cycles between 2 conformational states during catalysis to transfer electrons from the quinol bound in the Q(0) site in cytochrome b to cytochrome c1. Incorporation of UQCRFS1 is the penultimate step in complex III assembly. In terms of biological role, component of the ubiquinol-cytochrome c oxidoreductase (cytochrome b-c1 complex, complex III, CIII). UQCRFS1 undergoes proteolytic processing once it is incorporated in the complex III dimer. One of the fragments, called subunit 9, corresponds to its mitochondrial targeting sequence (MTS). The proteolytic processing is necessary for the correct insertion of UQCRFS1 in the complex III dimer, but the persistence of UQCRFS1-derived fragments may prevent newly imported UQCRFS1 to be processed and assembled into complex III and is detrimental for the complex III structure and function. In Mus musculus (Mouse), this protein is Cytochrome b-c1 complex subunit Rieske, mitochondrial.